The following is a 221-amino-acid chain: Serine/arginine-rich splicing factor 2 (221 aa).

The RRM domain occupies 14 to 92 (TSLKVDNLTY…RELRVQMARY (79 aa)). The tract at residues 91 to 221 (RYGRPPDSHH…SPEEEGAVSS (131 aa)) is disordered. 2 stretches are compositionally biased toward basic residues: residues 117–171 (RRSR…RSKS) and 179–189 (SRSRSRSRSRS).

This sequence belongs to the splicing factor SR family. Extensively phosphorylated on serine residues in the RS domain.

It is found in the nucleus. Functionally, necessary for the splicing of pre-mRNA. It is required for formation of the earliest ATP-dependent splicing complex and interacts with spliceosomal components bound to both the 5'- and 3'-splice sites during spliceosome assembly. It also is required for ATP-dependent interactions of both U1 and U2 snRNPs with pre-mRNA. In Gallus gallus (Chicken), this protein is Serine/arginine-rich splicing factor 2 (SRSF2).